The chain runs to 571 residues: Ubiquitin-like-specific protease 1C (571 aa).

Residues 221-260 are disordered; that stretch reads SESKDPKGDRRPNEAYGKGKPNESSPYLLVDDDDGDDDKV. A compositionally biased stretch (basic and acidic residues) spans 222 to 233; the sequence is ESKDPKGDRRPN. Catalysis depends on residues H426, D449, and C512.

Belongs to the peptidase C48 family.

It localises to the nucleus. The protein localises to the nucleoplasm. Its function is as follows. Protease that catalyzes two essential functions in the SUMO pathway: processing of full-length SUMOs to their mature forms and deconjugation of SUMO from targeted proteins. Cleaves precursors of SUM1 and SUM2, but not of SUM3 or SUM5. Able to release SUM1 and SUM2 from conjugates, but unable to cleave SUM3. Protease activity mainly directed at deconjugating SUM1 and SUM2 from their target proteins. Regulates salt stress responses and flowering time. Redundant with ULP1D. The protein is Ubiquitin-like-specific protease 1C (ULP1C) of Arabidopsis thaliana (Mouse-ear cress).